The following is a 710-amino-acid chain: Lactoperoxidase (710 aa).

Residues methionine 1–alanine 23 form the signal peptide. Positions serine 24–arginine 80 are excised as a propeptide. A disulfide bond links cysteine 130 and cysteine 143. Position 223 (aspartate 223) interacts with heme b. The Proton acceptor role is filled by histidine 224. Aspartate 225 contacts Ca(2+). Cystine bridges form between cysteine 244-cysteine 254 and cysteine 248-cysteine 272. Residues threonine 299, phenylalanine 301, aspartate 303, and serine 305 each coordinate Ca(2+). Serine 313 bears the Phosphoserine mark. The cysteines at positions 352 and 363 are disulfide-linked. 2 residues coordinate heme b: glutamate 373 and histidine 466. Position 480 is a 3'-nitrotyrosine (tyrosine 480). Cystine bridges form between cysteine 571–cysteine 628 and cysteine 669–cysteine 694.

This sequence belongs to the peroxidase family. It depends on Ca(2+) as a cofactor. The cofactor is heme b. As to expression, expressed in the colon, including colonocytes and mucin-containing goblet cells. Not detected in the ileum.

The protein resides in the secreted. It localises to the cytoplasm. It carries out the reaction 2 a phenolic donor + H2O2 = 2 a phenolic radical donor + 2 H2O. It catalyses the reaction thiocyanate + H2O2 + H(+) = hypothiocyanous acid + H2O. The enzyme catalyses iodide + H2O2 = hypoiodite + H2O. Its function is as follows. Heme-containing oxidoreductase which catalyzes the conversion of thiocyanate (SCN(-)) into antimicrobial agent hypothiocyanous acid (OSCN(-)) in the presence of hydrogen peroxide (H2O2). Also involved in the conversion of iodide (I(-)) into hypoiodite (IO(-)) in the presence of H2O2. Responsible for the inactivation of a wide range of micro-organisms and hence, important component of defense mechanism. May be implicated in airway host defense against infection. May contribute to maintaining an appropriate H2O2 cellular level, therefore protecting cells from H2O2-caused injuries and inflammation. The chain is Lactoperoxidase from Mus musculus (Mouse).